Consider the following 73-residue polypeptide: Mitofissin (73 aa).

This sequence belongs to the ?ATG44? family. As to quaternary structure, homooligomer. Found as homooctamer in solution, but binds to membranes either as a monomer, dimer, or tetramer, not as an octamer.

The protein resides in the mitochondrion intermembrane space. The protein localises to the vacuole. Its function is as follows. Mitochondrial fission factor that acts directly on lipid membranes to drive mitochondrial fission required for mitophagy. Directly binds to lipid membranes and brings about lipid membrane fragility to facilitate membrane fission and engulfment of mitochondria by the phagophore. The protein is Mitofissin of Saccharomyces cerevisiae (strain ATCC 204508 / S288c) (Baker's yeast).